A 256-amino-acid chain; its full sequence is MKEPLKIGLMDSGMGGLSVLKELLKYDSELEIVYYGDLKNSPYGEKDASEVLELVRSVCNFLQKENVSAILLACNTATSAAAQTLRKEFSIPIFGMEPAIKPAILQNPGKKVALLATPVTQREEKLQRLKSELKAEELVLSISCPGLAGLVDQGDFDKAEKYLRPILANLQEQDVENLVLGCTHYVFLKQIILKNFPNVKIYDGNSGTIKHLLNSLQVPRVILNGSQNNRSIYKLILNSEKEFHFRLASKLLSLKE.

Substrate contacts are provided by residues aspartate 11–serine 12 and tyrosine 43–glycine 44. Catalysis depends on cysteine 74, which acts as the Proton donor/acceptor. Asparagine 75–threonine 76 lines the substrate pocket. Cysteine 182 serves as the catalytic Proton donor/acceptor. Substrate is bound at residue threonine 183–histidine 184.

Belongs to the aspartate/glutamate racemases family.

It carries out the reaction L-glutamate = D-glutamate. Its pathway is cell wall biogenesis; peptidoglycan biosynthesis. Its function is as follows. Provides the (R)-glutamate required for cell wall biosynthesis. The protein is Glutamate racemase of Leptospira interrogans serogroup Icterohaemorrhagiae serovar copenhageni (strain Fiocruz L1-130).